Reading from the N-terminus, the 163-residue chain is Ribonuclease H (163 aa).

The RNase H type-1 domain occupies Thr16–Thr157. The Mg(2+) site is built by Asp25, Glu63, Asp85, and Asp149.

The protein belongs to the RNase H family. As to quaternary structure, monomer. The cofactor is Mg(2+).

Its subcellular location is the cytoplasm. It catalyses the reaction Endonucleolytic cleavage to 5'-phosphomonoester.. Functionally, endonuclease that specifically degrades the RNA of RNA-DNA hybrids. The chain is Ribonuclease H from Pelobacter propionicus (strain DSM 2379 / NBRC 103807 / OttBd1).